The primary structure comprises 301 residues: Ribosomal RNA large subunit methyltransferase F (301 aa).

The protein belongs to the methyltransferase superfamily. METTL16/RlmF family.

It is found in the cytoplasm. The catalysed reaction is adenosine(1618) in 23S rRNA + S-adenosyl-L-methionine = N(6)-methyladenosine(1618) in 23S rRNA + S-adenosyl-L-homocysteine + H(+). Its function is as follows. Specifically methylates the adenine in position 1618 of 23S rRNA. The sequence is that of Ribosomal RNA large subunit methyltransferase F from Colwellia psychrerythraea (strain 34H / ATCC BAA-681) (Vibrio psychroerythus).